The chain runs to 466 residues: UDP-N-acetylmuramoylalanine--D-glutamate ligase (466 aa).

Residue 117–123 (GTKGKTT) coordinates ATP.

Belongs to the MurCDEF family.

The protein resides in the cytoplasm. It carries out the reaction UDP-N-acetyl-alpha-D-muramoyl-L-alanine + D-glutamate + ATP = UDP-N-acetyl-alpha-D-muramoyl-L-alanyl-D-glutamate + ADP + phosphate + H(+). The protein operates within cell wall biogenesis; peptidoglycan biosynthesis. In terms of biological role, cell wall formation. Catalyzes the addition of glutamate to the nucleotide precursor UDP-N-acetylmuramoyl-L-alanine (UMA). The sequence is that of UDP-N-acetylmuramoylalanine--D-glutamate ligase from Roseiflexus sp. (strain RS-1).